We begin with the raw amino-acid sequence, 205 residues long: Inactive ribonuclease-like protein 9 (205 aa).

Residues 1 to 24 form the signal peptide; that stretch reads MMLITTHSLPLLLLLLQLWQPLQF. 3 cysteine pairs are disulfide-bonded: Cys97-Cys152, Cys115-Cys167, and Cys122-Cys129. N-linked (GlcNAc...) asparagine glycosylation is found at Asn130 and Asn142.

It belongs to the pancreatic ribonuclease family.

It is found in the secreted. Functionally, does not exhibit any ribonuclease activity. This Cebus albifrons (White-fronted capuchin) protein is Inactive ribonuclease-like protein 9 (RNASE9).